We begin with the raw amino-acid sequence, 352 residues long: Lipase chaperone (352 aa).

Residues 7-28 (LSLVAVVVAGGLTLYWRWPAAV) form a helical membrane-spanning segment.

Belongs to the lipase chaperone family.

It is found in the cell inner membrane. May be involved in the folding of the extracellular lipase during its passage through the periplasm. This Pseudomonas wisconsinensis protein is Lipase chaperone (lifO).